The primary structure comprises 862 residues: S-layer protein EA1 (862 aa).

An N-terminal signal peptide occupies residues 1-29 (MAKTNSYKKVIAGTMTAAMVAGIVSPVAA). 3 SLH domains span residues 30 to 93 (AGKS…NAQP), 94 to 151 (SFKD…KVNG), and 152 to 214 (ELVT…DNAQ).

It localises to the secreted. The protein localises to the cell wall. The protein resides in the S-layer. Functionally, the S-layer is a paracrystalline mono-layered assembly of proteins which coat the surface of bacteria. The sequence is that of S-layer protein EA1 (eag) from Bacillus anthracis.